A 206-amino-acid polypeptide reads, in one-letter code: Two-component response regulator ARR7 (206 aa).

Residues 25 to 152 (HVLAVDDSIV…DVKRIKQLIM (128 aa)) enclose the Response regulatory domain. At Asp85 the chain carries 4-aspartylphosphate. Residues 165–206 (SNKRKLQEDSDTSSSSHDDTSIKDSSCSKRMKSESENLFSLL) form a disordered region.

The protein belongs to the ARR family. Type-A subfamily. Two-component system major event consists of a His-to-Asp phosphorelay between a sensor histidine kinase (HK) and a response regulator (RR). In plants, the His-to-Asp phosphorelay involves an additional intermediate named Histidine-containing phosphotransfer protein (HPt). This multistep phosphorelay consists of a His-Asp-His-Asp sequential transfer of a phosphate group between first a His and an Asp of the HK protein, followed by the transfer to a conserved His of the HPt protein and finally the transfer to an Asp in the receiver domain of the RR protein. In terms of tissue distribution, predominantly expressed in roots and young flowers.

Its subcellular location is the nucleus. Its function is as follows. Functions as a response regulator involved in His-to-Asp phosphorelay signal transduction system. Phosphorylation of the Asp residue in the receiver domain activates the ability of the protein to promote the transcription of target genes. Type-A response regulators seem to act as negative regulators of the cytokinin signaling. This chain is Two-component response regulator ARR7 (ARR7), found in Arabidopsis thaliana (Mouse-ear cress).